The primary structure comprises 505 residues: Kinesin light chain 3 (505 aa).

Residues 1-20 (MSVQVAAPGGLGLGLERPSP) are disordered. Residues 88–150 (LLALSAHVGA…EEEKSHLEFL (63 aa)) are a coiled coil. The interval 157–193 (DPPAESQQPESPPRRDSLASLFPSEEEERRGPEAVGA) is disordered. Phosphoserine is present on serine 173. 5 TPR repeats span residues 207 to 240 (LRTLHNLVIQYAGQGRYEVAVPLCRQALEDLERS), 249 to 282 (ATMLNILALVYRDQNKYKEATDLLHDALQIREQT), 291 to 324 (AATLNNLAVLYGKRGRYREAEPLCQRALEIREKV), 333 to 366 (AKQLNNLALLCQNQGKFEEVERHYARALSIYEAL), and 375 to 408 (AKTKNNLASAYLKQNKYQQAEELYKEILHREALP). Positions 409–505 (APLGAPNTGT…STSTQDLGPR (97 aa)) are disordered. The span at 416-434 (TGTTSDTQQQTLSRSSSFS) shows a compositional bias: low complexity. Residues 435 to 453 (KLRESIRRGSEKLVSRLRG) show a composition bias toward basic and acidic residues. Serine 467 is modified (phosphoserine). The segment covering 489–505 (SEASRTLSTSTQDLGPR) has biased composition (polar residues). Position 499 is a phosphothreonine (threonine 499).

The protein belongs to the kinesin light chain family. Oligomer composed of two heavy chains and two light chains. Associates with microtubulin in an ATP-dependent manner. Interacts with KIF5C. Interacts with ODF1. Interacts with LRGUK. Interacts with VDAC2.

Its subcellular location is the cytoplasm. The protein localises to the cytoskeleton. The protein resides in the mitochondrion. Kinesin is a microtubule-associated force-producing protein that may play a role in organelle transport. Plays a role during spermiogenesis in the development of the sperm tail midpiece and in the normal function of spermatozoa. May play a role in the formation of the mitochondrial sheath formation in the developing spermatid midpiece. This Bos taurus (Bovine) protein is Kinesin light chain 3 (KLC3).